The primary structure comprises 71 residues: Small ribosomal subunit protein bS21 (71 aa).

Belongs to the bacterial ribosomal protein bS21 family.

In Shewanella sp. (strain MR-4), this protein is Small ribosomal subunit protein bS21.